The sequence spans 146 residues: uncharacterized protein (146 aa).

This is an uncharacterized protein from Escherichia coli O157:H7.